Here is a 338-residue protein sequence, read N- to C-terminus: Aspartate-semialdehyde dehydrogenase (338 aa).

NADP(+)-binding positions include 13-16 and 41-42; these read SGAV and RS. Phosphate is bound at residue Arg101. Cys132 acts as the Acyl-thioester intermediate in catalysis. Residue Gln159 participates in substrate binding. Residues 162-163 and Pro187 each bind NADP(+); that span reads SG. Residue Lys216 participates in phosphate binding. Arg238 is a substrate binding site. The active-site Proton acceptor is the His245. Asn317 contributes to the NADP(+) binding site.

This sequence belongs to the aspartate-semialdehyde dehydrogenase family. As to quaternary structure, homodimer.

It carries out the reaction L-aspartate 4-semialdehyde + phosphate + NADP(+) = 4-phospho-L-aspartate + NADPH + H(+). It participates in amino-acid biosynthesis; L-lysine biosynthesis via DAP pathway; (S)-tetrahydrodipicolinate from L-aspartate: step 2/4. Its pathway is amino-acid biosynthesis; L-methionine biosynthesis via de novo pathway; L-homoserine from L-aspartate: step 2/3. It functions in the pathway amino-acid biosynthesis; L-threonine biosynthesis; L-threonine from L-aspartate: step 2/5. In terms of biological role, catalyzes the NADPH-dependent formation of L-aspartate-semialdehyde (L-ASA) by the reductive dephosphorylation of L-aspartyl-4-phosphate. This Shewanella sp. (strain DB6705) protein is Aspartate-semialdehyde dehydrogenase.